A 90-amino-acid polypeptide reads, in one-letter code: DNA-binding protein HU-alpha (90 aa).

This sequence belongs to the bacterial histone-like protein family. In terms of assembly, heterodimer of an alpha and a beta chain.

Histone-like DNA-binding protein which is capable of wrapping DNA to stabilize it, and thus to prevent its denaturation under extreme environmental conditions. The polypeptide is DNA-binding protein HU-alpha (hupA) (Vibrio proteolyticus (Aeromonas proteolytica)).